The sequence spans 171 residues: 3-hydroxyanthranilate 3,4-dioxygenase (171 aa).

R45 lines the O2 pocket. H49, E55, and H93 together coordinate Fe cation. E55 is a binding site for substrate. Substrate contacts are provided by R97 and E107. A divalent metal cation-binding residues include C122, C125, C159, and C162.

It belongs to the 3-HAO family. Requires Fe(2+) as cofactor.

The protein localises to the cytoplasm. The enzyme catalyses 3-hydroxyanthranilate + O2 = (2Z,4Z)-2-amino-3-carboxymuconate 6-semialdehyde. Its pathway is cofactor biosynthesis; NAD(+) biosynthesis; quinolinate from L-kynurenine: step 3/3. In terms of biological role, catalyzes the oxidative ring opening of 3-hydroxyanthranilate to 2-amino-3-carboxymuconate semialdehyde, which spontaneously cyclizes to quinolinate. The sequence is that of 3-hydroxyanthranilate 3,4-dioxygenase from Candida albicans (strain SC5314 / ATCC MYA-2876) (Yeast).